The chain runs to 691 residues: Elongation factor G (691 aa).

Residues 10 to 284 form the tr-type G domain; it reads KRLRNIGIAA…AVVDYLPSPL (275 aa). Residues 19–26, 83–87, and 137–140 each bind GTP; these read AHIDAGKT, DTPGH, and NKMD.

Belongs to the TRAFAC class translation factor GTPase superfamily. Classic translation factor GTPase family. EF-G/EF-2 subfamily.

The protein localises to the cytoplasm. Its function is as follows. Catalyzes the GTP-dependent ribosomal translocation step during translation elongation. During this step, the ribosome changes from the pre-translocational (PRE) to the post-translocational (POST) state as the newly formed A-site-bound peptidyl-tRNA and P-site-bound deacylated tRNA move to the P and E sites, respectively. Catalyzes the coordinated movement of the two tRNA molecules, the mRNA and conformational changes in the ribosome. The chain is Elongation factor G (fusA) from Thermus thermophilus (strain ATCC 27634 / DSM 579 / HB8).